A 349-amino-acid chain; its full sequence is Bifunctional protein FolKE (349 aa).

Residues 1–226 (MQTTYLSMGS…LFEIDSSKND (226 aa)) form a 2-amino-4-hydroxy-6-hydroxymethyldihydropteridine pyrophosphokinase region. Positions 226–349 (DSIVLIKDIP…KRMEFLESLL (124 aa)) are GTP cyclohydrolase 1.

It in the N-terminal section; belongs to the HPPK family. This sequence in the C-terminal section; belongs to the GTP cyclohydrolase I family. As to quaternary structure, homomer.

It catalyses the reaction 6-hydroxymethyl-7,8-dihydropterin + ATP = (7,8-dihydropterin-6-yl)methyl diphosphate + AMP + H(+). It carries out the reaction GTP + H2O = 7,8-dihydroneopterin 3'-triphosphate + formate + H(+). The protein operates within cofactor biosynthesis; 7,8-dihydroneopterin triphosphate biosynthesis; 7,8-dihydroneopterin triphosphate from GTP: step 1/1. It functions in the pathway cofactor biosynthesis; tetrahydrofolate biosynthesis; 2-amino-4-hydroxy-6-hydroxymethyl-7,8-dihydropteridine diphosphate from 7,8-dihydroneopterin triphosphate: step 4/4. The sequence is that of Bifunctional protein FolKE (folKE) from Lactococcus lactis subsp. cremoris (strain MG1363).